The following is a 432-amino-acid chain: Fibroleukin (432 aa).

Residues 1 to 19 (MRLPGWLWLSSAVLAACRA) form the signal peptide. N-linked (GlcNAc...) asparagine glycosylation is present at Asn24. Residues 71-157 (GSMEEVLKEV…QGRLETLHLV (87 aa)) adopt a coiled-coil conformation. The interval 100 to 122 (QADDHRDPGGNGGNGAETAEDSR) is disordered. Asn172, Asn228, Asn256, and Asn329 each carry an N-linked (GlcNAc...) asparagine glycan. A Fibrinogen C-terminal domain is found at 197–429 (PVQHLIYKDC…QAKMMIRPKN (233 aa)). A disulfide bridge links Cys206 with Cys235. A disulfide bridge connects residues Cys364 and Cys377.

As to quaternary structure, homotetramer; disulfide-linked. Constitutively expressed in cytotoxic T-cells.

It is found in the secreted. Its function is as follows. Converts prothrombin to thrombin. This Mus musculus (Mouse) protein is Fibroleukin (Fgl2).